The chain runs to 476 residues: UDP-N-acetylmuramoylalanine--D-glutamate ligase (476 aa).

ATP is bound at residue 122–128 (GSNAKST).

This sequence belongs to the MurCDEF family.

It localises to the cytoplasm. The enzyme catalyses UDP-N-acetyl-alpha-D-muramoyl-L-alanine + D-glutamate + ATP = UDP-N-acetyl-alpha-D-muramoyl-L-alanyl-D-glutamate + ADP + phosphate + H(+). The protein operates within cell wall biogenesis; peptidoglycan biosynthesis. In terms of biological role, cell wall formation. Catalyzes the addition of glutamate to the nucleotide precursor UDP-N-acetylmuramoyl-L-alanine (UMA). The polypeptide is UDP-N-acetylmuramoylalanine--D-glutamate ligase (Psychrobacter arcticus (strain DSM 17307 / VKM B-2377 / 273-4)).